The primary structure comprises 2031 residues: Pericentriolar material 1 protein (2031 aa).

Disordered regions lie at residues 1 to 82 (MATG…HTFP) and 111 to 165 (DQRS…STRS). The tract at residues 1–484 (MATGGGPPDE…RSTEQRTLGS (484 aa)) is self-association. Residues 42 to 58 (RSAEKNKKKFVECDLRL) are compositionally biased toward basic and acidic residues. Polar residues predominate over residues 114–130 (SIGSDSQGRATAANNKR). Over residues 149–162 (NKEKSKSPPKREAS) the composition is skewed to basic and acidic residues. The stretch at 302-394 (RQEAKEELKN…FHNQLHDSED (93 aa)) forms a coiled coil. Residues 469-494 (SSVSPRRSTEQRTLGSAVSSALTSDN) are compositionally biased toward polar residues. The tract at residues 469 to 495 (SSVSPRRSTEQRTLGSAVSSALTSDNR) is disordered. The stretch at 523 to 549 (AEKLKKLKEVRKRLNELRELVHYYEQT) forms a coiled coil. Disordered stretches follow at residues 550–590 (SDMM…NPQY) and 649–678 (KEED…NSVA). A compositionally biased stretch (acidic residues) spans 562-580 (KDEDETEDSEYDSEQEDAE). Polar residues-rich tracts occupy residues 581 to 590 (PTTNIRNPQY) and 667 to 677 (SRASLSSQNSV). Residues 684 to 711 (VDFEQKFNRLVAAKQKLKQLQDLVAMYG) are a coiled coil. The disordered stretch occupies residues 712–752 (DDSESEPVAPERSFSGDQFPPEATTLKQQPNNTRPNVSKAQ). Residues 736 to 750 (TLKQQPNNTRPNVSK) show a composition bias toward polar residues. Residues 745 to 1271 (RPNVSKAQKD…PACFGAGLSA (527 aa)) are self-association and localization to centrosomes. A coiled-coil region spans residues 757 to 805 (LKEQAREKFYESKLQQQQRELSQLQEERKKLIEIQEKIQTLRKACPDLQ). Polar residues-rich tracts occupy residues 806–823 (LSTS…NRQM) and 888–898 (QGNTETTSAAS). Disordered stretches follow at residues 806–835 (LSTS…VNTN) and 882–1014 (AEHQ…VSMR). Positions 858–892 (SEIRKHQILREDLRQRRKQLETLMAEHQRRQGNTE) form a coiled coil. The segment covering 930 to 945 (LEEEEEEEEVDDEECL) has biased composition (acidic residues). Composition is skewed to polar residues over residues 960–981 (NTSC…FNGR) and 1004–1013 (KTRQQQNVSM). The stretch at 1025-1049 (LSHVEEKEHWQEQIDQIKKQLDYST) forms a coiled coil. 4 disordered regions span residues 1123 to 1146 (QHLQ…TSPN), 1219 to 1247 (KPFE…QGRR), 1318 to 1345 (SAQA…QKSK), and 1514 to 1533 (PVCQ…LSTS). Composition is skewed to basic and acidic residues over residues 1127-1136 (GESHQREDRG) and 1221-1247 (FESH…QGRR). Residues 1331 to 1345 (KAKNKKRKVFHQKSK) are compositionally biased toward basic residues. The segment covering 1524–1533 (GDNISSLSTS) has biased composition (polar residues). Residues 1550 to 1599 (HFDQALARMREYERMKSETENGLVADCCNNLNAAASSLEGTNDEARGRAQ) adopt a coiled-coil conformation. Disordered regions lie at residues 1746 to 1802 (ADKE…DLDE), 1817 to 1870 (ALTN…EANI), 1922 to 1965 (NNVK…DEDD), and 2007 to 2031 (ENGA…IHPA). A compositionally biased stretch (basic and acidic residues) spans 1771–1784 (KDETETAEENRNFD). The segment covering 1824 to 1835 (GEDENEDEENYE) has biased composition (acidic residues). Composition is skewed to polar residues over residues 1843–1852 (VQTSLETSSE) and 1922–1942 (NNVK…SDTE).

Belongs to the PCM1 family. Self-associates. Interacts with cetn3.

Its subcellular location is the cytoplasm. It is found in the cytoskeleton. The protein localises to the microtubule organizing center. It localises to the centrosome. The protein resides in the cytoplasmic granule. Its subcellular location is the centriolar satellite. It is found in the cilium basal body. Functionally, required to anchor microtubules to the centrosome. Required for centrosome assembly and function. Essential for the correct localization of several centrosomal proteins including cetn3 and pcnt. Probably involved in the biogenesis of cilia. This chain is Pericentriolar material 1 protein (pcm1), found in Xenopus laevis (African clawed frog).